The following is a 112-amino-acid chain: Mitochondrial import inner membrane translocase subunit TIM14-3 (112 aa).

Position 2 is an N-acetylalanine (Ala2). A helical transmembrane segment spans residues 6-28; sequence IAGAAVAAAAVAGRYGILAWQAF. A J domain is found at 53–112; it reads EAALILGVRESVVADKVKEAHRRVMVANHPDAGGSHYLASKINEAKDMMLGKSNNSGSAF.

The protein belongs to the TIM14 family. In terms of assembly, probable component of the PAM complex at least composed of a mitochondrial HSP70 protein, TIMM44 and TIMM14. The complex interacts with the TIMM23 component of the TIM17:23 complex.

The protein localises to the mitochondrion. The protein resides in the mitochondrion inner membrane. In terms of biological role, component of the PAM complex, a complex required for the translocation of transit peptide-containing proteins from the inner membrane into the mitochondrial matrix in an ATP-dependent manner. This Arabidopsis thaliana (Mouse-ear cress) protein is Mitochondrial import inner membrane translocase subunit TIM14-3 (TIM14-3).